Here is a 313-residue protein sequence, read N- to C-terminus: Ribosomal RNA small subunit methyltransferase H (313 aa).

S-adenosyl-L-methionine is bound by residues 36-38 (GGH), aspartate 56, phenylalanine 80, aspartate 102, and glutamine 109.

The protein belongs to the methyltransferase superfamily. RsmH family.

It localises to the cytoplasm. The catalysed reaction is cytidine(1402) in 16S rRNA + S-adenosyl-L-methionine = N(4)-methylcytidine(1402) in 16S rRNA + S-adenosyl-L-homocysteine + H(+). Functionally, specifically methylates the N4 position of cytidine in position 1402 (C1402) of 16S rRNA. The sequence is that of Ribosomal RNA small subunit methyltransferase H from Actinobacillus pleuropneumoniae serotype 7 (strain AP76).